Reading from the N-terminus, the 585-residue chain is MITRLSTLFLRTLREDPADAEVPSHKLLVRAGYIRRTAPGVYTWLPLGLRTLRKVETVVREEMDAIGAQELLFPALLPREPYEQTHRWTEYGDSLFRLKDRKGGDYLLGPTHEEMFASAVKDMYSSYKDFPVTLYQIQTKYRDEERPRAGILRGREFVMKDSYSFDMSDAGLEDSYQRHREAYQRILDRLGVEYVICAATSGAMGGSASEEFLAVSDNGEDTFVRATEGPYAANVEAVVTQPGVERPLEQAPEAVEYETPNAETIEALVQWAQSAGVTVEDRSVAAADTLKCLLVKITQPGAEEAELAGILLPGDREVDMKRLEASVEPAEVELASEEDFKNNPFLVKGYVGPRALNAHGVKVLADPRVVSGTSWIAGADAVEHHVVGLTMGRDFTVDGYIEAAEIREGDPAPEGQGTLTLARGIEVGHIFQLGRKYTEAFDVQILDESGKRAIPTMGSYGIGVSRLMAVLAEQRHDETGLNWPLEVAPYQVHVVVANKDKEAIEAGDALVAALDSHGIEVLFDDRPKVSPGVKFKDAELLGMPFVVVLGRAFKDGNIELRERGQETVLVSADEIVDTVVAKLNR.

Belongs to the class-II aminoacyl-tRNA synthetase family. ProS type 1 subfamily. In terms of assembly, homodimer.

Its subcellular location is the cytoplasm. It carries out the reaction tRNA(Pro) + L-proline + ATP = L-prolyl-tRNA(Pro) + AMP + diphosphate. In terms of biological role, catalyzes the attachment of proline to tRNA(Pro) in a two-step reaction: proline is first activated by ATP to form Pro-AMP and then transferred to the acceptor end of tRNA(Pro). As ProRS can inadvertently accommodate and process non-cognate amino acids such as alanine and cysteine, to avoid such errors it has two additional distinct editing activities against alanine. One activity is designated as 'pretransfer' editing and involves the tRNA(Pro)-independent hydrolysis of activated Ala-AMP. The other activity is designated 'posttransfer' editing and involves deacylation of mischarged Ala-tRNA(Pro). The misacylated Cys-tRNA(Pro) is not edited by ProRS. The sequence is that of Proline--tRNA ligase from Corynebacterium diphtheriae (strain ATCC 700971 / NCTC 13129 / Biotype gravis).